The sequence spans 182 residues: MMIDDFETHAARSSGDLWSEVCSSLPEPREQHGGQFTDSFEPSSPGDPHTDSPRAANFSPWEPMADSEVYIAGLENRLKRIKGQTSEVTSREMLRSLSQAKKECWDRFLHDAQTSELFQEGNFDQSALEQFKRWLSPERVAINAEELEYLLLPTQNSETPASSSQTDKPCVEEEEECPSPEK.

Basic and acidic residues predominate over residues 1 to 10 (MMIDDFETHA). Disordered stretches follow at residues 1–61 (MMID…FSPW) and 153–182 (PTQNSETPASSSQTDKPCVEEEEECPSPEK). Over residues 153–167 (PTQNSETPASSSQTD) the composition is skewed to polar residues. Residues 172–182 (EEEEECPSPEK) show a composition bias toward acidic residues.

As to quaternary structure, associates with adaptor protein complex 2 (AP-2).

It is found in the membrane. The protein localises to the coated pit. Regulates clathrin-mediated endocytsois of cargos such as transferrin probably through the association and modulation of adaptor protein complex 2 (AP-2). Has a role in ciliogenesis and is required for proper cephalic and left/right axis development. This chain is Coiled-coil domain-containing protein 32, found in Danio rerio (Zebrafish).